The following is a 36-amino-acid chain: Photosystem I reaction center subunit VIII (36 aa).

The helical transmembrane segment at 9–29 threads the bilayer; the sequence is ILVPLVGLVFPAITMVSLFLY.

The protein belongs to the PsaI family.

Its subcellular location is the plastid. It localises to the chloroplast thylakoid membrane. Functionally, may help in the organization of the PsaL subunit. This Zygnema circumcarinatum (Green alga) protein is Photosystem I reaction center subunit VIII.